A 637-amino-acid polypeptide reads, in one-letter code: Acyl-CoA ligase cm3C (637 aa).

Residues 282 to 290 (TSGTSGRQK), 423 to 428 (HAWGLT), D507, R526, and K624 each bind ATP. Residues 353-423 (DMQRMLGSVA…SLQPSWEFLH (71 aa)) form an SBD1 region. The tract at residues 424–486 (AWGLTETCIV…YKAPNMFVGY (63 aa)) is SBD2.

It belongs to the ATP-dependent AMP-binding enzyme family.

Its pathway is secondary metabolite biosynthesis. In terms of biological role, acyl-CoA ligase; part of the gene cluster that mediates the biosynthesis of beauveriolides I and III, cyclodepsipeptides acting as inhibitors of the acyl-CoA:cholesterol acyltransferase. The HR-PKS cm3B initiates the biosynthesis of beauveriolides by iteratively catalyzing the formation of the linear polyketide chain. The ATP-dependent acetyl-CoA ligase cm3D converts the polyketide carboxylic acid to a CoA thioester which id shuttled to the first T domain in the NRPS cm3A by the acetyltransferase cm3C. Cm3A contains 13 domains and assembles the polyketide chain, L-phenylalanine, L-alanine, and D-leucine (or D-allo-isoleucine) to form beauveriolide I (or beauveriolide III). The production of both beauveriolides I and III suggests the substrate adaptability of cm3B, using different amino acids as substrates. The polypeptide is Acyl-CoA ligase cm3C (Cordyceps militaris (strain CM01) (Caterpillar fungus)).